The chain runs to 328 residues: Renalase (328 aa).

FAD-binding positions include A13, 32 to 33 (DK), R40, and 56 to 57 (QY). Residues 57–61 (YFTAR) and 96–98 (SPD) each bind substrate. I128 contacts FAD. T185 is a substrate binding site. D302 contributes to the FAD binding site. R308 is a substrate binding site. An FAD-binding site is contributed by V309.

This sequence belongs to the bacterial renalase family. Requires FAD as cofactor.

The catalysed reaction is 1,2-dihydro-beta-NAD + O2 + H(+) = H2O2 + NAD(+). It catalyses the reaction 1,2-dihydro-beta-NADP + O2 + H(+) = H2O2 + NADP(+). The enzyme catalyses 1,6-dihydro-beta-NADP + O2 + H(+) = H2O2 + NADP(+). It carries out the reaction 1,6-dihydro-beta-NAD + O2 + H(+) = H2O2 + NAD(+). Its function is as follows. Catalyzes the oxidation of the 1,2-dihydro- and 1,6-dihydro- isomeric forms of beta-NAD(P) back to beta-NAD(P)+. Has a preference for 1,2-dihydro-beta-NAD as substrate. May serve to protect primary metabolism dehydrogenases from inhibition by the 1,2-dihydro- and 1,6-dihydro-beta-NAD(P) isomers. This Pseudomonas savastanoi pv. phaseolicola (strain 1448A / Race 6) (Pseudomonas syringae pv. phaseolicola (strain 1448A / Race 6)) protein is Renalase.